Reading from the N-terminus, the 202-residue chain is Guanylate kinase (202 aa).

One can recognise a Guanylate kinase-like domain in the interval 3-181; the sequence is GNLFVVAAPS…ALDDLRAVVR (179 aa). 10-17 contacts ATP; sequence APSGAGKT.

It belongs to the guanylate kinase family.

The protein localises to the cytoplasm. The enzyme catalyses GMP + ATP = GDP + ADP. Functionally, essential for recycling GMP and indirectly, cGMP. In Dechloromonas aromatica (strain RCB), this protein is Guanylate kinase.